Consider the following 314-residue polypeptide: Ribosomal protein uL3 glutamine methyltransferase (314 aa).

This sequence belongs to the protein N5-glutamine methyltransferase family. PrmB subfamily.

The catalysed reaction is L-glutaminyl-[ribosomal protein uL3] + S-adenosyl-L-methionine = N(5)-methyl-L-glutaminyl-[ribosomal protein uL3] + S-adenosyl-L-homocysteine + H(+). Its function is as follows. Methylates large ribosomal subunit protein uL3 on a specific glutamine residue. The sequence is that of Ribosomal protein uL3 glutamine methyltransferase from Francisella tularensis subsp. tularensis (strain SCHU S4 / Schu 4).